The primary structure comprises 87 residues: Type 3 secretion system needle filament protein (87 aa).

This sequence belongs to the SctF family. The core secretion machinery of the T3SS is composed of approximately 20 different proteins, including cytoplasmic components, a base, an export apparatus and a needle. This subunit polymerizes and forms the helical needle filament. Forms high-order oligomers in vitro. Forms a stable ternary complex with the YscE-YscG chaperone. Interacts directly with YscG but makes very little direct contact with YscE. Interacts with the needle adapter protein YscI/SctI.

The protein localises to the secreted. It is found in the cell surface. With respect to regulation, the secretion and/or polymerization may be controlled by the type III secretion system regulator YopR. Interaction with YscE-YscG chaperone prevents premature polymerization of YscF/SctF in the bacterial cytosol and is required for its stability and efficient secretion. Interaction with the needle adapter protein YscI/SctI is required for YscF/SctF secretion, needle assembly and Yop secretion. The N-terminus varies among bacterial species, not only in amino acid composition but also in the number of amino acids, and may function in manipulating the host response to the advantage of the bacteria. In Y.pestis, the N-terminus can function to decrease cytokine induction, perhaps contributing to a favorable immune environment leading to survival of Y.pestis within the eukaryotic host. Functionally, component of the type III secretion system (T3SS), also called injectisome, which is used to inject bacterial effector proteins into eukaryotic host cells. YscF/SctF forms the external needle filament that protrudes from the bacterial surface. Essential for the calcium-dependent regulation of T3SS and Yop secretion. Required to block Yop secretion in the presence of extracellular calcium. May be the extracellular T3SS component that senses extracellular calcium and/or participates in transmitting the calcium signal to the cytoplasmic compartment where the block in secretion is initiated. In terms of biological role, during infection, can induce innate immune responses. The needle proteins interact with host TLR2 or TLR4, and induce signaling by NF-kappa-B and/or AP-1. This activation is MyD88 dependent and results in increased expression of cytokines, including TNF-alpha, IL-6 and IL-8. Innate immune responses are modulated by the N-terminal region of YscF/SctF. This chain is Type 3 secretion system needle filament protein, found in Yersinia pestis.